The following is a 487-amino-acid chain: Serralysin (487 aa).

Residues 1-16 (MQSTKKAIEITESNFA) constitute a propeptide that is removed on maturation. Residue H192 participates in Zn(2+) binding. Residue E193 is part of the active site. Zn(2+) contacts are provided by H196, H202, and Y232. Residues R269, G271, T273, D301, G303, G304, D306, T343, E345, G350, G352, D354, N359, A361, N363, G367, G368, A369, D372, G376, G377, G378, G379, D381, G385, G386, A387, G388, D390, D399, D406, and D416 each contribute to the Ca(2+) site. Hemolysin-type calcium-binding repeat units follow at residues 348-365 (IGGSGNDVIVGNAANNVL) and 366-383 (KGGAGNDVLFGGGGADEL).

The protein belongs to the peptidase M10B family. Ca(2+) serves as cofactor. Zn(2+) is required as a cofactor.

The protein resides in the secreted. The catalysed reaction is Preferential cleavage of bonds with hydrophobic residues in P1'.. Functionally, naturally present in the silkworm intestine and allows the emerging moth to dissolve its cocoon. The chain is Serralysin from Serratia marcescens (strain ATCC 21074 / E-15).